Consider the following 143-residue polypeptide: MNKTITPSIETIERNWFLVDAKDKTLGRLSTEIAAVLRGKNKPTFTPHLDTGDFVIVVNAEKVEVTGKKASQKLYRRHSGRPGGMKVEKFESLQERIPERIIEQAVKGMLPHNSLGRQQFKKLKVYKGSDHPHAAQNPVLLNS.

This sequence belongs to the universal ribosomal protein uL13 family. Part of the 50S ribosomal subunit.

In terms of biological role, this protein is one of the early assembly proteins of the 50S ribosomal subunit, although it is not seen to bind rRNA by itself. It is important during the early stages of 50S assembly. The sequence is that of Large ribosomal subunit protein uL13 from Prochlorococcus marinus subsp. pastoris (strain CCMP1986 / NIES-2087 / MED4).